We begin with the raw amino-acid sequence, 176 residues long: Inner membrane-spanning protein YciB (176 aa).

The next 5 helical transmembrane spans lie at 24-44 (TATA…AFRH), 49-69 (PMLW…LVLH), 76-96 (WKPT…QLAF), 119-139 (LNVV…FVAY), and 149-169 (FKLF…SLWL).

This sequence belongs to the YciB family.

The protein resides in the cell inner membrane. Plays a role in cell envelope biogenesis, maintenance of cell envelope integrity and membrane homeostasis. The sequence is that of Inner membrane-spanning protein YciB from Paraburkholderia xenovorans (strain LB400).